A 363-amino-acid chain; its full sequence is 5-formaminoimidazole-4-carboxamide-1-(beta)-D-ribofuranosyl 5'-monophosphate synthetase (363 aa).

Positions 29 and 96 each coordinate 5-amino-1-(5-phospho-beta-D-ribosyl)imidazole-4-carboxamide. Residues 118–350 (RDILRWESER…MGRRVAREIR (233 aa)) enclose the ATP-grasp domain. ATP contacts are provided by residues 148–210 (PEEI…TNFC) and Glu-232. 5-amino-1-(5-phospho-beta-D-ribosyl)imidazole-4-carboxamide is bound at residue Asn-260. Gln-299 and Glu-312 together coordinate Mg(2+).

It belongs to the phosphohexose mutase family. The cofactor is Mg(2+). Requires Mn(2+) as cofactor.

The catalysed reaction is 5-amino-1-(5-phospho-beta-D-ribosyl)imidazole-4-carboxamide + formate + ATP = 5-formamido-1-(5-phospho-D-ribosyl)imidazole-4-carboxamide + ADP + phosphate. It participates in purine metabolism; IMP biosynthesis via de novo pathway; 5-formamido-1-(5-phospho-D-ribosyl)imidazole-4-carboxamide from 5-amino-1-(5-phospho-D-ribosyl)imidazole-4-carboxamide (formate route): step 1/1. In terms of biological role, catalyzes the ATP- and formate-dependent formylation of 5-aminoimidazole-4-carboxamide-1-beta-d-ribofuranosyl 5'-monophosphate (AICAR) to 5-formaminoimidazole-4-carboxamide-1-beta-d-ribofuranosyl 5'-monophosphate (FAICAR) in the absence of folates. The chain is 5-formaminoimidazole-4-carboxamide-1-(beta)-D-ribofuranosyl 5'-monophosphate synthetase from Methanothermobacter thermautotrophicus (strain ATCC 29096 / DSM 1053 / JCM 10044 / NBRC 100330 / Delta H) (Methanobacterium thermoautotrophicum).